The following is a 252-amino-acid chain: Large ribosomal subunit protein uL10m (252 aa).

Residues 1–24 (MAATLCCRLLPKAGWVPLTQSVRH) constitute a mitochondrion transit peptide.

Belongs to the universal ribosomal protein uL10 family. In terms of assembly, component of the mitochondrial ribosome large subunit (39S) which comprises a 16S rRNA and about 50 distinct proteins.

The protein localises to the mitochondrion. This Danio rerio (Zebrafish) protein is Large ribosomal subunit protein uL10m (mrpl10).